The following is a 266-amino-acid chain: PTS system sorbose-specific EIIC component (266 aa).

Residues 1 to 237 (MEISTLQIIA…GGVGVIIALI (237 aa)) form the PTS EIIC type-4 domain. Helical transmembrane passes span 3 to 23 (ISTL…MGSV), 33 to 53 (LIAC…VMLG), 79 to 99 (IISA…IAIA), 100 to 120 (LPVA…TVVF), 151 to 171 (VAIP…SSML), 183 to 203 (QIAG…MMGV), and 219 to 239 (YLDF…LIYI).

The protein resides in the cell inner membrane. Its function is as follows. The phosphoenolpyruvate-dependent sugar phosphotransferase system (PTS), a major carbohydrate active transport system, catalyzes the phosphorylation of incoming sugar substrates concomitant with their translocation across the cell membrane. The enzyme II SorABFM PTS system is involved in L-sorbose transport. The polypeptide is PTS system sorbose-specific EIIC component (Klebsiella pneumoniae).